The primary structure comprises 362 residues: Phospho-N-acetylmuramoyl-pentapeptide-transferase (362 aa).

Transmembrane regions (helical) follow at residues 28–48 (GATVTALLISFLFGPRIIALL), 73–93 (TPTMGGFLILVGLVPSVLLWA), 100–120 (VWIVLFVTLGFGAVGFADDYL), 134–154 (VKLFFEFVIALIAMWALVLVS), 169–189 (TLLIELGGFFFLFGALVIVGS), 201–221 (GLAIVPVMIAAASLGLIVYLV), 241–261 (LAVFCGALIGAGLGFLWYNAP), 264–284 (MVFMGDTGSLALGGALGAIAV), 290–310 (LVLAIIGGLFVLEAVSVIVQV), and 339–359 (TVVVRFWIISVVLAMAGLATL).

This sequence belongs to the glycosyltransferase 4 family. MraY subfamily. The cofactor is Mg(2+).

It is found in the cell inner membrane. It carries out the reaction UDP-N-acetyl-alpha-D-muramoyl-L-alanyl-gamma-D-glutamyl-meso-2,6-diaminopimeloyl-D-alanyl-D-alanine + di-trans,octa-cis-undecaprenyl phosphate = di-trans,octa-cis-undecaprenyl diphospho-N-acetyl-alpha-D-muramoyl-L-alanyl-D-glutamyl-meso-2,6-diaminopimeloyl-D-alanyl-D-alanine + UMP. The protein operates within cell wall biogenesis; peptidoglycan biosynthesis. In terms of biological role, catalyzes the initial step of the lipid cycle reactions in the biosynthesis of the cell wall peptidoglycan: transfers peptidoglycan precursor phospho-MurNAc-pentapeptide from UDP-MurNAc-pentapeptide onto the lipid carrier undecaprenyl phosphate, yielding undecaprenyl-pyrophosphoryl-MurNAc-pentapeptide, known as lipid I. In Parvibaculum lavamentivorans (strain DS-1 / DSM 13023 / NCIMB 13966), this protein is Phospho-N-acetylmuramoyl-pentapeptide-transferase.